The sequence spans 228 residues: 7-cyano-7-deazaguanine synthase (228 aa).

9–19 serves as a coordination point for ATP; sequence LSGGPDSTTVL. Cysteine 193, cysteine 203, cysteine 206, and cysteine 209 together coordinate Zn(2+).

This sequence belongs to the QueC family. Requires Zn(2+) as cofactor.

The catalysed reaction is 7-carboxy-7-deazaguanine + NH4(+) + ATP = 7-cyano-7-deazaguanine + ADP + phosphate + H2O + H(+). It functions in the pathway purine metabolism; 7-cyano-7-deazaguanine biosynthesis. Functionally, catalyzes the ATP-dependent conversion of 7-carboxy-7-deazaguanine (CDG) to 7-cyano-7-deazaguanine (preQ(0)). This chain is 7-cyano-7-deazaguanine synthase, found in Rickettsia conorii (strain ATCC VR-613 / Malish 7).